The sequence spans 331 residues: N-arachidonyl glycine receptor (331 aa).

Residues 1 to 26 (MITLNNQDQPVPFNSSHPDEYKIAAL) are Extracellular-facing. Asn-14 carries N-linked (GlcNAc...) asparagine glycosylation. The helical transmembrane segment at 27–47 (VFYSCIFIIGLFVNITALWVF) threads the bilayer. At 48–56 (SCTTKKRTT) the chain is on the cytoplasmic side. The chain crosses the membrane as a helical span at residues 57-77 (VTIYMMNVALVDLIFIMTLPF). The Extracellular portion of the chain corresponds to 78-95 (RMFYYAKDEWPFGEYFCQ). A disulfide bond links Cys-94 and Cys-172. The chain crosses the membrane as a helical span at residues 96–116 (ILGALTVFYPSIALWLLAFIS). The Cytoplasmic portion of the chain corresponds to 117–138 (ADRYMAIVQPKYAKELKNTCKA). Residues 139-159 (VLACVGVWIMTLTTTTPLLLL) traverse the membrane as a helical segment. At 160–191 (YKDPDKDSTPATCLKISDIIYLKAVNVLNLTR) the chain is on the extracellular side. Residues 192-212 (LTFFFLIPLFIMIGCYLVIIH) traverse the membrane as a helical segment. At 213–232 (NLLHGRTSKLKPKVKEKSIR) the chain is on the cytoplasmic side. A helical transmembrane segment spans residues 233–253 (IIITLLVQVLVCFMPFHICFA). Residues 254–268 (FLMLGTGENSYNPWG) lie on the Extracellular side of the membrane. The chain crosses the membrane as a helical span at residues 269-289 (AFTTFLMNLSTCLDVILYYIV). Over 290–331 (SKQFQARVISVMLYRNYLRSMRRKSFRSGSLRSLSNINSEML) the chain is Cytoplasmic. Phosphoserine is present on Ser-322.

This sequence belongs to the G-protein coupled receptor 1 family. In terms of tissue distribution, expressed in midpiece of spermatozoon (at protein level). Most abundant in testis and spleen. Highly expressed in CD4 and CD8-positive T-cells as well as CD19-positive B-cells.

The protein resides in the cell membrane. Its subcellular location is the cytoplasmic vesicle membrane. Its function is as follows. G protein-coupled receptor (GPCR) that plays a role in diverse physiological processes particularly within the immune and nervous systems. Becomes active when triggered by various endogenous ligands including endocannabinoid N-arachidonyl glycine (NAGly), delta-9-tetrahydrocannabinol or resolvin D2/RvD2 derived from the omega-3 fatty acid docosahexaenoic acid (DHA). Upon RvD2 binding, facilitates the resolution of inflammation, aiding in tissue repair and homeostasis. Mechanistically, RvD2 ligation initiates Galphas protein coupling, activation of cAMP-PKA signaling pathway and phosphorylation of STAT3, leading to RvD2-stimulated macrophage phagocytosis. Mediates NAGly-induced process of reorganization of actin filaments and induction of acrosomal exocytosis. Activation by N-arachidonoyl glycine (NAGly) can also induce apoptosis in macrophages. Plays a role in homeostasis of CD8+ subsets of intraepithelial lymphocytes (IELs) (CD8alphaalpha and CD8alphabeta IELs) in small intestine by supporting preferential migration of CD8alphaalpha T-cells to intraepithelial compartment over lamina propria compartment, and by mediating their reconstitution into small intestine after bone marrow transplant. Also participates in hypotensive responses, mediating reduction in intraocular and blood pressure. The chain is N-arachidonyl glycine receptor (GPR18) from Homo sapiens (Human).